Consider the following 288-residue polypeptide: Bifunctional protein FolD (288 aa).

Residues Gly165–Ser167 and Ser190 each bind NADP(+).

Belongs to the tetrahydrofolate dehydrogenase/cyclohydrolase family. Homodimer.

It carries out the reaction (6R)-5,10-methylene-5,6,7,8-tetrahydrofolate + NADP(+) = (6R)-5,10-methenyltetrahydrofolate + NADPH. The catalysed reaction is (6R)-5,10-methenyltetrahydrofolate + H2O = (6R)-10-formyltetrahydrofolate + H(+). The protein operates within one-carbon metabolism; tetrahydrofolate interconversion. Its function is as follows. Catalyzes the oxidation of 5,10-methylenetetrahydrofolate to 5,10-methenyltetrahydrofolate and then the hydrolysis of 5,10-methenyltetrahydrofolate to 10-formyltetrahydrofolate. This is Bifunctional protein FolD from Bdellovibrio bacteriovorus (strain ATCC 15356 / DSM 50701 / NCIMB 9529 / HD100).